The primary structure comprises 134 residues: MPTIQQLVRKGRESFADKSKSPALNSCPQRRGVCVRVYTTTPKKPNSAMRKVARVRLTNSKEVNAYIPGEGHNLQEHSIVLVRGGRVKDLPGVRYHIVRGTLDTAGVNGRTQRRSKYGAKRPKPGQAPAAKGKK.

The interval 1–26 (MPTIQQLVRKGRESFADKSKSPALNS) is disordered. Basic and acidic residues predominate over residues 10–20 (KGRESFADKSK). Aspartate 89 bears the 3-methylthioaspartic acid mark. The tract at residues 103 to 134 (DTAGVNGRTQRRSKYGAKRPKPGQAPAAKGKK) is disordered. A compositionally biased stretch (basic residues) spans 111 to 123 (TQRRSKYGAKRPK). Residues 124–134 (PGQAPAAKGKK) are compositionally biased toward low complexity.

Belongs to the universal ribosomal protein uS12 family. Part of the 30S ribosomal subunit. Contacts proteins S8 and S17. May interact with IF1 in the 30S initiation complex.

Functionally, with S4 and S5 plays an important role in translational accuracy. In terms of biological role, interacts with and stabilizes bases of the 16S rRNA that are involved in tRNA selection in the A site and with the mRNA backbone. Located at the interface of the 30S and 50S subunits, it traverses the body of the 30S subunit contacting proteins on the other side and probably holding the rRNA structure together. The combined cluster of proteins S8, S12 and S17 appears to hold together the shoulder and platform of the 30S subunit. The sequence is that of Small ribosomal subunit protein uS12 from Porphyromonas gingivalis (strain ATCC BAA-308 / W83).